Here is a 289-residue protein sequence, read N- to C-terminus: MKLIVGTRGSKLALAQTNKVAERLKERYEVEIRIVKTAGDIMKDKPLYEFKGMGAFVRALDTALAEGKVDVAVHSFKDVPSQRVEGTVVAAVIERDSPCDVLISRDGSTLEELDEGAVVGTSSLRRRAQLSRLRGDLRFENLRGNLDTRLRKLREGNYDAIVVAEAGLKRLGLDREVEYQPFPPEVIVPPANQGIIAIATRKGEEDLVAFLNDEKTWLEAMVERAVIKELGVGCAVPVGVYAEAQSRVRLICEILDKKYLRVEEKLSKDTAVEEAAEIGKDLRKEIYGG.

The residue at position 234 (Cys234) is an S-(dipyrrolylmethanemethyl)cysteine.

The protein belongs to the HMBS family. Dipyrromethane is required as a cofactor.

The catalysed reaction is 4 porphobilinogen + H2O = hydroxymethylbilane + 4 NH4(+). It participates in porphyrin-containing compound metabolism; protoporphyrin-IX biosynthesis; coproporphyrinogen-III from 5-aminolevulinate: step 2/4. Its function is as follows. Tetrapolymerization of the monopyrrole PBG into the hydroxymethylbilane pre-uroporphyrinogen in several discrete steps. This chain is Probable porphobilinogen deaminase (hemC), found in Archaeoglobus fulgidus (strain ATCC 49558 / DSM 4304 / JCM 9628 / NBRC 100126 / VC-16).